A 483-amino-acid chain; its full sequence is tRNA sulfurtransferase (483 aa).

In terms of domain architecture, THUMP spans 62–166 (PEICDALTRI…QDKLILVKAR (105 aa)). Residues 184 to 185 (LI), Lys266, Gly288, and Gln297 contribute to the ATP site. A disulfide bridge connects residues Cys345 and Cys457. Residues 405–483 (LADTDVLLDI…GYTNVKVYRP (79 aa)) enclose the Rhodanese domain. Catalysis depends on Cys457, which acts as the Cysteine persulfide intermediate.

This sequence belongs to the ThiI family.

The protein localises to the cytoplasm. It carries out the reaction [ThiI sulfur-carrier protein]-S-sulfanyl-L-cysteine + a uridine in tRNA + 2 reduced [2Fe-2S]-[ferredoxin] + ATP + H(+) = [ThiI sulfur-carrier protein]-L-cysteine + a 4-thiouridine in tRNA + 2 oxidized [2Fe-2S]-[ferredoxin] + AMP + diphosphate. It catalyses the reaction [ThiS sulfur-carrier protein]-C-terminal Gly-Gly-AMP + S-sulfanyl-L-cysteinyl-[cysteine desulfurase] + AH2 = [ThiS sulfur-carrier protein]-C-terminal-Gly-aminoethanethioate + L-cysteinyl-[cysteine desulfurase] + A + AMP + 2 H(+). Its pathway is cofactor biosynthesis; thiamine diphosphate biosynthesis. Its function is as follows. Catalyzes the ATP-dependent transfer of a sulfur to tRNA to produce 4-thiouridine in position 8 of tRNAs, which functions as a near-UV photosensor. Also catalyzes the transfer of sulfur to the sulfur carrier protein ThiS, forming ThiS-thiocarboxylate. This is a step in the synthesis of thiazole, in the thiamine biosynthesis pathway. The sulfur is donated as persulfide by IscS. The sequence is that of tRNA sulfurtransferase from Yersinia pseudotuberculosis serotype IB (strain PB1/+).